A 183-amino-acid polypeptide reads, in one-letter code: Ubiquitin-conjugating enzyme E2 H (183 aa).

The UBC core domain maps to M1–T150. The residue at position 60 (K60) is an N6-acetyllysine. C87 serves as the catalytic Glycyl thioester intermediate. Residues E152–L183 form a disordered region. The span at D163–D172 shows a compositional bias: low complexity. Residues F173–L183 show a composition bias toward acidic residues.

It belongs to the ubiquitin-conjugating enzyme family. Interacts with MAEA and WDR26, components of the CTLH complex that contains GID4, RANBP9 and/or RANBP10, MKLN1, MAEA, RMND5A (or alternatively its paralog RMND5B), GID8, ARMC8, WDR26 and YPEL5. Post-translationally, autoubiquitinated in vitro in the presence of NEDD4L.

It carries out the reaction S-ubiquitinyl-[E1 ubiquitin-activating enzyme]-L-cysteine + [E2 ubiquitin-conjugating enzyme]-L-cysteine = [E1 ubiquitin-activating enzyme]-L-cysteine + S-ubiquitinyl-[E2 ubiquitin-conjugating enzyme]-L-cysteine.. The enzyme catalyses S-ubiquitinyl-[E1 ubiquitin-activating enzyme]-L-cysteine + [acceptor protein]-L-lysine = [E1 ubiquitin-activating enzyme]-L-cysteine + N(6)-monoubiquitinyl-[acceptor protein]-L-lysine.. It participates in protein modification; protein ubiquitination. Functionally, accepts ubiquitin from the E1 complex and catalyzes its covalent attachment to other proteins. E2 ubiquitin conjugating enzyme that transfers ubiquitin to MAEA, a core component of the CTLH E3 ubiquitin-protein ligase complex. In vitro catalyzes 'Lys-11'- and 'Lys-48'-linked polyubiquitination. Capable, in vitro, to ubiquitinate histone H2A. The polypeptide is Ubiquitin-conjugating enzyme E2 H (UBE2H) (Homo sapiens (Human)).